Reading from the N-terminus, the 659-residue chain is Sodium/nucleoside cotransporter 2 (659 aa).

The segment covering 1–10 (MAKSEGRKSA) has biased composition (basic and acidic residues). A disordered region spans residues 1 to 22 (MAKSEGRKSASQDTSENGMENP). At serine 46 the chain carries Phosphoserine. Transmembrane regions (helical) follow at residues 81–101 (ILLG…CILN), 105–124 (ALAL…CHFL), 149–167 (KRVF…LALD), 173–193 (EQLI…ACSK), 201–221 (RTVF…IRTE), 234–254 (IQIF…DTLV), 261–281 (QSLP…YLGL), 296–315 (TMGT…FVGM), 337–356 (VMTG…FISF), 363–382 (LISA…KLVY), 424–444 (VAAN…TLSW), 455–475 (TFQV…GVQW), 530–550 (ATFS…LGGL), and 568–588 (ALFT…ILYV).

The protein belongs to the concentrative nucleoside transporter (CNT) (TC 2.A.41) family. Expressed in liver (in bile canalicular membrane vesicles (CMV) but not in sinusoidal vesicles), jejunum, spleen and heart. Also expressed in brain and skeletal muscle. Not expressed in kidney, muscle and lung.

Its subcellular location is the membrane. The protein resides in the apicolateral cell membrane. The catalysed reaction is adenosine(out) + Na(+)(out) = adenosine(in) + Na(+)(in). The enzyme catalyses inosine(out) + Na(+)(out) = inosine(in) + Na(+)(in). It catalyses the reaction guanosine(out) + Na(+)(out) = guanosine(in) + Na(+)(in). It carries out the reaction uridine(out) + Na(+)(out) = uridine(in) + Na(+)(in). Its activity is regulated as follows. Inhibited by formycin B, partially inhibited by purine analog ara-A. Functionally, sodium-dependent and purine-selective. Exhibits the transport characteristics of the nucleoside transport system cif or N1 subtype (N1/cif) (selective for purine nucleosides and uridine). Accepts purine, analogs of purine nucleosides and uridine, and exhibits high affinity for adenosine. May contribute to regulate the transport of organic compounds in testes across the blood-testis-barrier. The polypeptide is Sodium/nucleoside cotransporter 2 (Slc28a2) (Rattus norvegicus (Rat)).